A 537-amino-acid chain; its full sequence is Protein disulfide isomerase-like 1-5 (537 aa).

The N-terminal stretch at 1-29 (MSLIPKPISKVSTFTFILLILLSFTIIIA) is a signal peptide. One can recognise a Thioredoxin 1 domain in the interval 58–184 (LQEDRPEQQS…IVIWVQKKTG (127 aa)). Cysteine 106 (nucleophile) is an active-site residue. 3 N-linked (GlcNAc...) asparagine glycosylation sites follow: asparagine 160, asparagine 364, and asparagine 416. A Thioredoxin 2 domain is found at 380-526 (LLESDPSPNS…IAVFINEELL (147 aa)). Catalysis depends on nucleophile residues cysteine 447 and cysteine 450. Cysteines 447 and 450 form a disulfide. The N-linked (GlcNAc...) asparagine glycan is linked to asparagine 530. The Prevents secretion from ER motif lies at 534 to 537 (KDEL).

This sequence belongs to the protein disulfide isomerase family. In terms of tissue distribution, widely expressed.

The protein localises to the endoplasmic reticulum lumen. It carries out the reaction Catalyzes the rearrangement of -S-S- bonds in proteins.. Acts as a protein-folding catalyst that interacts with nascent polypeptides to catalyze the formation, isomerization, and reduction or oxidation of disulfide bonds. The polypeptide is Protein disulfide isomerase-like 1-5 (PDIL1-5) (Arabidopsis thaliana (Mouse-ear cress)).